We begin with the raw amino-acid sequence, 138 residues long: Cysteine desulfuration protein SufE (138 aa).

The active-site Cysteine persulfide intermediate is the Cys51.

This sequence belongs to the SufE family. In terms of assembly, homodimer. Interacts with SufS.

It localises to the cytoplasm. It participates in cofactor biosynthesis; iron-sulfur cluster biosynthesis. Its function is as follows. Participates in cysteine desulfuration mediated by SufS. Cysteine desulfuration mobilizes sulfur from L-cysteine to yield L-alanine and constitutes an essential step in sulfur metabolism for biosynthesis of a variety of sulfur-containing biomolecules. Functions as a sulfur acceptor for SufS, by mediating the direct transfer of the sulfur atom from the S-sulfanylcysteine of SufS, an intermediate product of cysteine desulfuration process. The chain is Cysteine desulfuration protein SufE from Escherichia coli O157:H7.